Reading from the N-terminus, the 168-residue chain is Small ribosomal subunit protein uS5 (168 aa).

An S5 DRBM domain is found at 14 to 77 (FEERVVSINR…EAAKKNLITV (64 aa)).

This sequence belongs to the universal ribosomal protein uS5 family. As to quaternary structure, part of the 30S ribosomal subunit. Contacts proteins S4 and S8.

With S4 and S12 plays an important role in translational accuracy. Functionally, located at the back of the 30S subunit body where it stabilizes the conformation of the head with respect to the body. This is Small ribosomal subunit protein uS5 from Lactococcus lactis subsp. lactis (strain IL1403) (Streptococcus lactis).